The chain runs to 353 residues: Rhodopsin (353 aa).

The Extracellular portion of the chain corresponds to 1 to 36; sequence MNGTEGPYFYIPMLNTTGIVRSPYEYPQYYLVNPAA. Asn2 and Asn15 each carry an N-linked (GlcNAc...) asparagine glycan. A helical transmembrane segment spans residues 37-61; sequence YAALCAYMFLLILLGFPINFLTLYV. Residues 62-73 lie on the Cytoplasmic side of the membrane; it reads TIEHKKLRTPLN. Residues 74–96 traverse the membrane as a helical segment; sequence YILLNLAVANLFMVFGGFTTTMY. The Extracellular segment spans residues 97 to 110; the sequence is TSMHGYFVLGRLGC. An intrachain disulfide couples Cys110 to Cys187. The helical transmembrane segment at 111 to 133 threads the bilayer; the sequence is NLEGFFATLGGEIGLWSLVVLAV. The 'Ionic lock' involved in activated form stabilization signature appears at 134 to 136; the sequence is ERW. Over 134–152 the chain is Cytoplasmic; that stretch reads ERWMVVCKPISNFRFTENH. Residues 153–173 form a helical membrane-spanning segment; it reads AIMGLGFTWFAASACAVPPLV. Residues 174–202 are Extracellular-facing; sequence GWSRYIPEGMQCSCGVDYYTRAEGFNNES. Asn200 carries an N-linked (GlcNAc...) asparagine glycan. Residues 203-224 traverse the membrane as a helical segment; that stretch reads FVVYMFVCHFLIPLIVVFFCYG. The Cytoplasmic segment spans residues 225-252; that stretch reads RLLCAVKEAAAAQQESETTQRAEREVTR. Residues 253 to 274 traverse the membrane as a helical segment; sequence MVVIMVIAFLICWCPYAGVAWY. The Extracellular portion of the chain corresponds to 275–286; that stretch reads IFSNQGSEFGPL. Residues 287–308 form a helical membrane-spanning segment; the sequence is FMTIPAFFAKSSSIYNPLIYIF. Lys296 is subject to N6-(retinylidene)lysine. At 309–353 the chain is on the cytoplasmic side; that stretch reads MNKQFRHCMITTLCCGKNPFEEEEGSTTTSKTEASSASSSSVSPA. S-palmitoyl cysteine attachment occurs at residues Cys322 and Cys323. The tract at residues 329–353 is disordered; the sequence is EEEEGSTTTSKTEASSASSSSVSPA. Residues 334–353 are compositionally biased toward low complexity; sequence STTTSKTEASSASSSSVSPA.

This sequence belongs to the G-protein coupled receptor 1 family. Opsin subfamily. Post-translationally, phosphorylated on some or all of the serine and threonine residues present in the C-terminal region. Contains one covalently linked retinal chromophore.

It localises to the membrane. It is found in the cell projection. The protein localises to the cilium. Its subcellular location is the photoreceptor outer segment. In terms of biological role, photoreceptor required for image-forming vision at low light intensity. While most salt water fish species use retinal as chromophore, most freshwater fish use 3-dehydroretinal, or a mixture of retinal and 3-dehydroretinal. Light-induced isomerization of 11-cis to all-trans retinal triggers a conformational change that activates signaling via G-proteins. Subsequent receptor phosphorylation mediates displacement of the bound G-protein alpha subunit by arrestin and terminates signaling. This is Rhodopsin (rho) from Solea solea (Common sole).